Here is a 797-residue protein sequence, read N- to C-terminus: Methionine--tRNA ligase, cytoplasmic (797 aa).

The 'HIGH' region signature appears at 26 to 36 (PYVNNVPHLGN). Residues 348 to 352 (KFSKS) carry the 'KMSKS' region motif. Residue Lys-351 participates in ATP binding. The disordered stretch occupies residues 601 to 634 (DQLNKTKLSDAKKQKASSKGGGKPKPQPAADREI). Residues 635-738 (TMARLDIRVG…KTANIGERVT (104 aa)) form the tRNA-binding domain.

It belongs to the class-I aminoacyl-tRNA synthetase family.

The protein resides in the cytoplasm. It is found in the cytosol. The catalysed reaction is tRNA(Met) + L-methionine + ATP = L-methionyl-tRNA(Met) + AMP + diphosphate. This is Methionine--tRNA ligase, cytoplasmic from Arabidopsis thaliana (Mouse-ear cress).